A 734-amino-acid polypeptide reads, in one-letter code: Photosystem I P700 chlorophyll a apoprotein A2 (734 aa).

The next 8 membrane-spanning stretches (helical) occupy residues 46 to 69 (IFAS…FHVA), 135 to 158 (LYTG…LHLQ), 175 to 199 (LNHH…HVAI), 273 to 291 (IAHH…GHMY), 330 to 353 (IHFQ…QHMY), 369 to 395 (AALY…IFFI), 417 to 439 (AIIS…LYVH), and 517 to 535 (FLVH…LILV). [4Fe-4S] cluster is bound by residues cysteine 559 and cysteine 568. Transmembrane regions (helical) follow at residues 575–596 (AFYL…YWHW) and 643–665 (LSVW…MFLI). Histidine 654, methionine 662, and tyrosine 670 together coordinate chlorophyll a. Tryptophan 671 serves as a coordination point for phylloquinone. Residues 707–727 (LVGLAHFSVGYIFTYAAFLIA) traverse the membrane as a helical segment.

Belongs to the PsaA/PsaB family. In terms of assembly, the PsaA/B heterodimer binds the P700 chlorophyll special pair and subsequent electron acceptors. PSI consists of a core antenna complex that captures photons, and an electron transfer chain that converts photonic excitation into a charge separation. The eukaryotic PSI reaction center is composed of at least 11 subunits. Requires P700 is a chlorophyll a/chlorophyll a' dimer, A0 is one or more chlorophyll a, A1 is one or both phylloquinones and FX is a shared 4Fe-4S iron-sulfur center. as cofactor.

It is found in the plastid. The protein localises to the chloroplast thylakoid membrane. It carries out the reaction reduced [plastocyanin] + hnu + oxidized [2Fe-2S]-[ferredoxin] = oxidized [plastocyanin] + reduced [2Fe-2S]-[ferredoxin]. In terms of biological role, psaA and PsaB bind P700, the primary electron donor of photosystem I (PSI), as well as the electron acceptors A0, A1 and FX. PSI is a plastocyanin-ferredoxin oxidoreductase, converting photonic excitation into a charge separation, which transfers an electron from the donor P700 chlorophyll pair to the spectroscopically characterized acceptors A0, A1, FX, FA and FB in turn. Oxidized P700 is reduced on the lumenal side of the thylakoid membrane by plastocyanin. This Oryza sativa (Rice) protein is Photosystem I P700 chlorophyll a apoprotein A2.